The chain runs to 1390 residues: Hepatocyte growth factor receptor (1390 aa).

An N-terminal signal peptide occupies residues 1–24 (MKTPAVLAPGILVLLFTLVQRSNG). The Extracellular portion of the chain corresponds to 25-932 (ECKEALAKSK…VIVQPDQNFT (908 aa)). One can recognise a Sema domain in the interval 27–515 (KEALAKSKMN…TGKKITKIPL (489 aa)). Asn45 carries N-linked (GlcNAc...) asparagine glycosylation. Cystine bridges form between Cys95/Cys101, Cys98/Cys160, Cys133/Cys141, and Cys172/Cys175. N-linked (GlcNAc...) asparagine glycosylation is present at Asn106. An N-linked (GlcNAc...) asparagine glycan is attached at Asn149. N-linked (GlcNAc...) asparagine glycosylation occurs at Asn202. 2 disulfide bridges follow: Cys298–Cys363 and Cys385–Cys397. Asn399 and Asn405 each carry an N-linked (GlcNAc...) asparagine glycan. Intrachain disulfides connect Cys520/Cys538, Cys526/Cys561, Cys529/Cys545, and Cys541/Cys551. IPT/TIG domains are found at residues 563–655 (PAIY…FSYV), 657–739 (PVIT…FSYR), and 742–836 (PIVY…LIYV). An O-linked (Man) threonine glycan is attached at Thr582. N-linked (GlcNAc...) asparagine glycans are attached at residues Asn607 and Asn635. O-linked (Man) threonine glycosylation is found at Thr676 and Thr761. 3 N-linked (GlcNAc...) asparagine glycosylation sites follow: Asn785, Asn879, and Asn930. The chain crosses the membrane as a helical span at residues 933–955 (GLIAGVVSISVALLLLLGFFLWL). Residues 956 to 1390 (KKRKQIKDLG…TRPASFWETS (435 aa)) lie on the Cytoplasmic side of the membrane. At Ser966 the chain carries Phosphoserine. Phosphothreonine is present on Thr977. Residues Ser990, Ser997, and Ser1000 each carry the phosphoserine modification. Phosphotyrosine is present on Tyr1003. One can recognise a Protein kinase domain in the interval 1078-1345 (VHFNEVIGRG…RISAIFSTFI (268 aa)). ATP-binding positions include 1084–1092 (IGRGHFGCV) and Lys1110. The Proton acceptor role is filled by Asp1204. Residues 1212-1381 (LDEKFTVKVA…EDNADNEVDT (170 aa)) form an interaction with RANBP9 region. At Tyr1230 the chain carries Phosphotyrosine. 2 positions are modified to phosphotyrosine; by autocatalysis: Tyr1234 and Tyr1235. Position 1289 is a phosphothreonine (Thr1289). The segment at 1320–1359 (WHPKAEMRPSFSELVSRISAIFSTFIGEHYVHVNATYVNV) is interaction with MUC20. Residues Tyr1349 and Tyr1356 each carry the phosphotyrosine; by autocatalysis modification. Tyr1365 is subject to Phosphotyrosine.

Belongs to the protein kinase superfamily. Tyr protein kinase family. As to quaternary structure, heterodimer made of an alpha chain (50 kDa) and a beta chain (145 kDa) which are disulfide linked. Binds PLXNB1. Interacts when phosphorylated with downstream effectors including STAT3, PIK3R1, SRC, PCLG1, GRB2 and GAB1. Interacts with SPSB1, SPSB2 and SPSB4. Interacts with INPP5D/SHIP1. When phosphorylated at Tyr-1356, interacts with INPPL1/SHIP2. Interacts with RANBP9 and RANBP10, as well as SPSB1, SPSB2, SPSB3 and SPSB4. SPSB1 binding occurs in the presence and in the absence of HGF, however HGF treatment has a positive effect on this interaction. Interacts with MUC20; prevents interaction with GRB2 and suppresses hepatocyte growth factor-induced cell proliferation. Interacts with GRB10. Interacts with PTPN1 and PTPN2. Interacts with HSP90AA1 and HSP90AB1; the interaction suppresses MET kinase activity. Interacts with tensin TNS3. Interacts (when phosphorylated) with tensin TNS4 (via SH2 domain); the interaction increases MET protein stability by inhibiting MET endocytosis and subsequent lysosomal degradation. Post-translationally, autophosphorylated in response to ligand binding on Tyr-1234 and Tyr-1235 in the kinase domain leading to further phosphorylation of Tyr-1349 and Tyr-1356 in the C-terminal multifunctional docking site. Dephosphorylated by PTPRJ at Tyr-1349 and Tyr-1365. Dephosphorylated by PTPN1 and PTPN2. Ubiquitinated. Ubiquitination by CBL regulates the receptor stability and activity through proteasomal degradation. In terms of processing, O-mannosylation of IPT/TIG domains by TMEM260 is required for protein maturation. O-mannosylated residues are composed of single mannose glycans that are not elongated or modified.

The protein resides in the membrane. It catalyses the reaction L-tyrosyl-[protein] + ATP = O-phospho-L-tyrosyl-[protein] + ADP + H(+). With respect to regulation, in its inactive state, the C-terminal tail interacts with the catalytic domain and inhibits the kinase activity. Upon ligand binding, the C-terminal tail is displaced and becomes phosphorylated, thus increasing the kinase activity. Receptor tyrosine kinase that transduces signals from the extracellular matrix into the cytoplasm by binding to hepatocyte growth factor/HGF ligand. Regulates many physiological processes including proliferation, scattering, morphogenesis and survival. Ligand binding at the cell surface induces autophosphorylation of MET on its intracellular domain that provides docking sites for downstream signaling molecules. Following activation by ligand, interacts with the PI3-kinase subunit PIK3R1, PLCG1, SRC, GRB2, STAT3 or the adapter GAB1. Recruitment of these downstream effectors by MET leads to the activation of several signaling cascades including the RAS-ERK, PI3 kinase-AKT, or PLCgamma-PKC. The RAS-ERK activation is associated with the morphogenetic effects while PI3K/AKT coordinates prosurvival effects. During embryonic development, MET signaling plays a role in gastrulation, development and migration of muscles and neuronal precursors, angiogenesis and kidney formation. In adults, participates in wound healing as well as organ regeneration and tissue remodeling. Also promotes differentiation and proliferation of hematopoietic cells. The sequence is that of Hepatocyte growth factor receptor (MET) from Nomascus leucogenys (Northern white-cheeked gibbon).